A 262-amino-acid chain; its full sequence is ATP synthase subunit a (262 aa).

5 consecutive transmembrane segments (helical) span residues 24-44 (AVHL…LFVF), 84-104 (VIAP…AIDL), 129-149 (DISA…FYTV), 194-214 (LFGN…MYMA), and 228-248 (LVWA…FMML).

The protein belongs to the ATPase A chain family. F-type ATPases have 2 components, CF(1) - the catalytic core - and CF(0) - the membrane proton channel. CF(1) has five subunits: alpha(3), beta(3), gamma(1), delta(1), epsilon(1). CF(0) has three main subunits: a(1), b(2) and c(9-12). The alpha and beta chains form an alternating ring which encloses part of the gamma chain. CF(1) is attached to CF(0) by a central stalk formed by the gamma and epsilon chains, while a peripheral stalk is formed by the delta and b chains.

It is found in the cell inner membrane. Key component of the proton channel; it plays a direct role in the translocation of protons across the membrane. The polypeptide is ATP synthase subunit a (Actinobacillus pleuropneumoniae serotype 3 (strain JL03)).